A 394-amino-acid chain; its full sequence is 8-amino-7-oxononanoate synthase (394 aa).

Arg-21 serves as a coordination point for substrate. Position 112–113 (112–113 (GY)) interacts with pyridoxal 5'-phosphate. His-137 is a binding site for substrate. The pyridoxal 5'-phosphate site is built by Ser-183, His-211, and Thr-239. The residue at position 242 (Lys-242) is an N6-(pyridoxal phosphate)lysine. Thr-358 provides a ligand contact to substrate.

Belongs to the class-II pyridoxal-phosphate-dependent aminotransferase family. BioF subfamily. As to quaternary structure, homodimer. The cofactor is pyridoxal 5'-phosphate.

The catalysed reaction is 6-carboxyhexanoyl-[ACP] + L-alanine + H(+) = (8S)-8-amino-7-oxononanoate + holo-[ACP] + CO2. It functions in the pathway cofactor biosynthesis; biotin biosynthesis. Functionally, catalyzes the decarboxylative condensation of pimeloyl-[acyl-carrier protein] and L-alanine to produce 8-amino-7-oxononanoate (AON), [acyl-carrier protein], and carbon dioxide. This is 8-amino-7-oxononanoate synthase from Paraburkholderia xenovorans (strain LB400).